Reading from the N-terminus, the 512-residue chain is Glutathione-binding protein GsiB (512 aa).

The first 26 residues, 1–26 (MTQFITHKWLAALGLASSIAAFPALA), serve as a signal peptide directing secretion.

This sequence belongs to the bacterial solute-binding protein 5 family. The complex is composed of two ATP-binding proteins (GsiA), two transmembrane proteins (GsiC and GsiD) and a solute-binding protein (GsiB).

It is found in the periplasm. Functionally, part of the ABC transporter complex GsiABCD involved in glutathione import. Binds glutathione. The chain is Glutathione-binding protein GsiB from Salmonella typhi.